The chain runs to 283 residues: Pantothenate synthetase (283 aa).

Position 30–37 (30–37 (MGALHEGH)) interacts with ATP. The Proton donor role is filled by H37. A (R)-pantoate-binding site is contributed by Q61. Q61 contributes to the beta-alanine binding site. ATP is bound at residue 147 to 150 (GEKD). Q153 provides a ligand contact to (R)-pantoate. ATP is bound by residues I176 and 184–187 (VSSR).

The protein belongs to the pantothenate synthetase family. Homodimer.

Its subcellular location is the cytoplasm. It carries out the reaction (R)-pantoate + beta-alanine + ATP = (R)-pantothenate + AMP + diphosphate + H(+). It participates in cofactor biosynthesis; (R)-pantothenate biosynthesis; (R)-pantothenate from (R)-pantoate and beta-alanine: step 1/1. Catalyzes the condensation of pantoate with beta-alanine in an ATP-dependent reaction via a pantoyl-adenylate intermediate. This is Pantothenate synthetase from Chlorobium phaeobacteroides (strain DSM 266 / SMG 266 / 2430).